Here is a 551-residue protein sequence, read N- to C-terminus: Chaperonin GroEL (551 aa).

ATP contacts are provided by residues 30–33 (TLGP), K51, 87–91 (DGTTT), G415, 479–481 (NAA), and D495.

The protein belongs to the chaperonin (HSP60) family. As to quaternary structure, forms a cylinder of 14 subunits composed of two heptameric rings stacked back-to-back. Interacts with the co-chaperonin GroES.

The protein localises to the cytoplasm. It catalyses the reaction ATP + H2O + a folded polypeptide = ADP + phosphate + an unfolded polypeptide.. Functionally, together with its co-chaperonin GroES, plays an essential role in assisting protein folding. The GroEL-GroES system forms a nano-cage that allows encapsulation of the non-native substrate proteins and provides a physical environment optimized to promote and accelerate protein folding. The polypeptide is Chaperonin GroEL (Acidithiobacillus ferrooxidans (strain ATCC 23270 / DSM 14882 / CIP 104768 / NCIMB 8455) (Ferrobacillus ferrooxidans (strain ATCC 23270))).